We begin with the raw amino-acid sequence, 193 residues long: Adenine phosphoribosyltransferase (193 aa).

This sequence belongs to the purine/pyrimidine phosphoribosyltransferase family. Homodimer.

It is found in the cytoplasm. The enzyme catalyses AMP + diphosphate = 5-phospho-alpha-D-ribose 1-diphosphate + adenine. Its pathway is purine metabolism; AMP biosynthesis via salvage pathway; AMP from adenine: step 1/1. Its function is as follows. Catalyzes a salvage reaction resulting in the formation of AMP, that is energically less costly than de novo synthesis. The polypeptide is Adenine phosphoribosyltransferase (Bifidobacterium longum (strain DJO10A)).